The chain runs to 570 residues: Coiled-coil domain-containing protein 22 homolog (570 aa).

Disordered regions lie at residues 110–129 (RQSE…REQL) and 234–280 (LTST…PLEL). The span at 248–257 (TSPTQTSTTA) shows a compositional bias: polar residues. A compositionally biased stretch (low complexity) spans 265 to 276 (SSEATATSTTTT). 2 coiled-coil regions span residues 308-471 (ELKI…LQRQ) and 529-570 (GEKL…ITVG).

This sequence belongs to the CCDC22 family.

The protein is Coiled-coil domain-containing protein 22 homolog of Drosophila willistoni (Fruit fly).